The sequence spans 277 residues: Cation-dependent mannose-6-phosphate receptor (277 aa).

The first 26 residues, 1–26 (MFPFYSCWRTGLLLLLLAVAVRESWQ), serve as a signal peptide directing secretion. The Lumenal segment spans residues 27–185 (TEEKTCDLVG…SLACSPEISH (159 aa)). An MRH domain is found at 30–181 (KTCDLVGEKG…EMDSSLACSP (152 aa)). Cys-32 and Cys-78 form a disulfide bridge. N-linked (GlcNAc...) asparagine glycosylation is found at Asn-57, Asn-83, Asn-94, Asn-107, and Asn-113. Cystine bridges form between Cys-132-Cys-167 and Cys-145-Cys-179. Residues 186 to 210 (LSVGSILLVTFASLVAVYVVGGFLY) traverse the membrane as a helical segment. The Cytoplasmic segment spans residues 211–277 (QRLVVGAKGM…EERDDHLLPM (67 aa)). The segment at 256-277 (RGVGDDQLGEESEERDDHLLPM) is disordered. Ser-267 carries the post-translational modification Phosphoserine.

Homodimer. Binds GGA1, GGA2 and GGA3.

Its subcellular location is the lysosome membrane. Its function is as follows. Transport of phosphorylated lysosomal enzymes from the Golgi complex and the cell surface to lysosomes. Lysosomal enzymes bearing phosphomannosyl residues bind specifically to mannose-6-phosphate receptors in the Golgi apparatus and the resulting receptor-ligand complex is transported to an acidic prelyosomal compartment where the low pH mediates the dissociation of the complex. In Homo sapiens (Human), this protein is Cation-dependent mannose-6-phosphate receptor (M6PR).